The primary structure comprises 1460 residues: CLIP-associating protein 1-A (1460 aa).

HEAT repeat units follow at residues 87 to 124 and 163 to 200; these read TQLG…QASN and LTLS…HVGE. The tract at residues 237 to 293 is disordered; sequence SDKNFDDEDSVDGNRPSSASSSASSKAPQTARRGVSLGTARRPGPSSAAAKTGGTAK. Residues 279–293 show a composition bias toward low complexity; that stretch reads PGPSSAAAKTGGTAK. HEAT repeat units lie at residues 407–442 and 443–479; these read HGAE…IRHT and HVPR…EWQT. Disordered regions lie at residues 545-605, 640-733, and 778-800; these read SDSI…IDVN, IRTR…RFGI, and PYGM…ERSY. The span at 550–569 shows a compositional bias: low complexity; the sequence is SLPQSDRSSSSSQESLNRPL. Residues 571–597 are compositionally biased toward polar residues; the sequence is TKRSPTGSTVSRASSTTSKSTPGSLQR. Positions 645–659 are enriched in low complexity; it reads QSSGSTTSTASTPAD. Polar residues-rich tracts occupy residues 669-681 and 715-724; these read VSQS…SNSP and QGCSRETSPS. Positions 789–800 are enriched in low complexity; it reads SDASSACSERSY. The stretch at 942 to 979 is one HEAT 5 repeat; that stretch reads FIVDQTQTPNLKVKVAILKYIESLARQMDPTDFVNSSE. A disordered region spans residues 1041-1084; that stretch reads LKNSSNSSMGSPSNTIGRTPSRHSSSRASPLTSPTNCSHGGLSP. The segment covering 1042-1054 has biased composition (low complexity); the sequence is KNSSNSSMGSPSN. Residues 1066–1078 show a composition bias toward polar residues; sequence SRASPLTSPTNCS. HEAT repeat units follow at residues 1272-1309 and 1390-1427; these read LLLE…YAEL and GLLQ…YLAQ.

The protein belongs to the CLASP family.

The protein resides in the cytoplasm. Its subcellular location is the cytoskeleton. The protein localises to the microtubule organizing center. It is found in the centrosome. It localises to the chromosome. The protein resides in the centromere. Its subcellular location is the kinetochore. The protein localises to the spindle. It is found in the golgi apparatus. It localises to the trans-Golgi network. In terms of biological role, microtubule plus-end tracking protein that promotes the stabilization of dynamic microtubules during anaphase. Plays a crucial role in chromatin-induced microtubule formation. May also act at microtubule minus ends. May be involved in the nucleation of noncentrosomal microtubules originating from the trans-Golgi network (TGN). The sequence is that of CLIP-associating protein 1-A (clasp1-a) from Xenopus laevis (African clawed frog).